The chain runs to 102 residues: MNQINIEIAYAFPERYYLKSFQVDEGITVQTAITQSGILSQFPEIDLSTNKIGIFSRPIKLTDVLKEGDRIEIYRPLLADPKEIRRKRAAEQAAAKDKEKGA.

Belongs to the UPF0125 (RnfH) family.

The polypeptide is Protein RnfH (Haemophilus influenzae (strain 86-028NP)).